The chain runs to 876 residues: Alanine--tRNA ligase (876 aa).

Residues His-560, His-564, Cys-662, and His-666 each contribute to the Zn(2+) site.

It belongs to the class-II aminoacyl-tRNA synthetase family. The cofactor is Zn(2+).

The protein localises to the cytoplasm. The catalysed reaction is tRNA(Ala) + L-alanine + ATP = L-alanyl-tRNA(Ala) + AMP + diphosphate. Its function is as follows. Catalyzes the attachment of alanine to tRNA(Ala) in a two-step reaction: alanine is first activated by ATP to form Ala-AMP and then transferred to the acceptor end of tRNA(Ala). Also edits incorrectly charged Ser-tRNA(Ala) and Gly-tRNA(Ala) via its editing domain. This chain is Alanine--tRNA ligase, found in Synechococcus elongatus (strain ATCC 33912 / PCC 7942 / FACHB-805) (Anacystis nidulans R2).